A 73-amino-acid chain; its full sequence is uncharacterized protein (73 aa).

This is an uncharacterized protein from Vertebrata (FPV).